The primary structure comprises 461 residues: tRNA modification GTPase MnmE (461 aa).

(6S)-5-formyl-5,6,7,8-tetrahydrofolate is bound by residues R23, E84, and K123. The TrmE-type G domain occupies 219–382 (GVQVVIGGRP…LLDHLTDTVA (164 aa)). GTP contacts are provided by residues 229-234 (NAGKST), 248-254 (SETPGTT), 273-276 (DTAG), and 337-340 (NKAD). The Mg(2+) site is built by S233 and T254. (6S)-5-formyl-5,6,7,8-tetrahydrofolate is bound at residue K461.

It belongs to the TRAFAC class TrmE-Era-EngA-EngB-Septin-like GTPase superfamily. TrmE GTPase family. Homodimer. Heterotetramer of two MnmE and two MnmG subunits. K(+) is required as a cofactor.

It localises to the cytoplasm. Functionally, exhibits a very high intrinsic GTPase hydrolysis rate. Involved in the addition of a carboxymethylaminomethyl (cmnm) group at the wobble position (U34) of certain tRNAs, forming tRNA-cmnm(5)s(2)U34. This chain is tRNA modification GTPase MnmE, found in Salinibacter ruber (strain DSM 13855 / M31).